We begin with the raw amino-acid sequence, 1061 residues long: E3 SUMO-protein ligase ZNF451 (1061 aa).

Residues 1–38 form a disordered region; that stretch reads MGDPGSEIIESVPPAGPEASESTTDENEDDIQFVSEGP. Residues 1–246 are sufficient for E3 SUMO-protein ligase activity; the sequence is MGDPGSEIIE…TDDGHNNNLL (246 aa). The tract at residues 1-344 is important for interaction with SUMO1 and SUMO2; that stretch reads MGDPGSEIIE…RVHCRNAGPV (344 aa). The interval 30 to 37 is interaction with SUMO2 1; sequence DIQFVSEG. The short motif at 38–41 is the PLRP element; it reads PLRP. The interaction with SUMO2 2 stretch occupies residues 42–50; sequence VLEYIDLVS. Glycyl lysine isopeptide (Lys-Gly) (interchain with G-Cter in SUMO2) cross-links involve residues Lys-75, Lys-77, Lys-106, Ile-121, Ala-130, Leu-138, Lys-139, Lys-144, and Lys-153. Ser-155 carries the phosphoserine modification. Omega-N-methylarginine is present on Arg-158. Glycyl lysine isopeptide (Lys-Gly) (interchain with G-Cter in SUMO2) cross-links involve residues Val-164 and Lys-167. The tract at residues 168-525 is important for interaction with SMAD4; that stretch reads PILCPIMHCN…HMSRIHGGAH (358 aa). The segment at 169-195 adopts a C2H2-type 1 zinc-finger fold; sequence ILCPIMHCNKEFDNGHLLLGHLKRFDH. Glycyl lysine isopeptide (Lys-Gly) (interchain with G-Cter in SUMO2) cross-links involve residues Gln-226, Gly-240, Pro-247, Ser-263, Lys-270, Lys-275, Lys-283, Asp-286, Lys-288, Pro-293, Lys-301, and Lys-309. The C2H2-type 2 zinc-finger motif lies at 253-277; that stretch reads FACPNCFLLFSRKEECSKHMSGKNH. Residues 315–337 form a C2H2-type 3 zinc finger; sequence VKCVACHKTLRSHMELTAHFRVH. Residue Lys-357 forms a Glycyl lysine isopeptide (Lys-Gly) (interchain with G-Cter in SUMO2) linkage. Residues 362–386 form a C2H2-type 4 zinc finger; sequence GYCPDCNQVFVDETSTQNHKQNSGH. A Glycyl lysine isopeptide (Lys-Gly) (interchain with G-Cter in SUMO2) cross-link involves residue Lys-423. Phosphoserine is present on Ser-432. Residues Lys-434, Lys-446, Lys-452, Lys-454, Lys-464, Phe-473, Val-490, Cys-500, Lys-505, Asp-508, Gly-522, Trp-532, Lys-543, and Lys-585 each participate in a glycyl lysine isopeptide (Lys-Gly) (interchain with G-Cter in SUMO2) cross-link. The C2H2-type 5 zinc-finger motif lies at 498 to 521; the sequence is YKCVVCGKVCDDSGVIRLHMSRIH. The segment at 531-554 adopts a C2H2-type 6 zinc-finger fold; sequence FWCRTCKKELTRKDTIMAHVTEFH. A C2H2-type 7; atypical zinc finger spans residues 606–631; that stretch reads WQCRICEDMFDSQEYVKQHCMSLASH. Glycyl lysine isopeptide (Lys-Gly) (interchain with G-Cter in SUMO2) cross-links involve residues Lys-632, Lys-647, and Lys-664. Residues 636 to 659 form a C2H2-type 8 zinc finger; that stretch reads YSCAHCRKPFHKIETLYRHCQDEH. Residues 667–690 form a C2H2-type 9 zinc finger; that stretch reads YFCGLCDLIFNVEEAFLSHYEEHH. Residue Lys-706 forms a Glycyl lysine isopeptide (Lys-Gly) (interchain with G-Cter in SUMO1); alternate linkage. Residue Lys-706 forms a Glycyl lysine isopeptide (Lys-Gly) (interchain with G-Cter in SUMO2); alternate linkage. Residues Lys-731 and Lys-748 each participate in a glycyl lysine isopeptide (Lys-Gly) (interchain with G-Cter in SUMO2) cross-link. The C2H2-type 10 zinc finger occupies 753-776; the sequence is FRCSLCSATAQNLTDMNTHIHQVH. Residues Lys-777, Lys-779, Lys-790, Lys-817, Lys-827, Lys-832, Lys-843, Lys-845, Lys-852, Lys-951, Lys-992, and Lys-993 each participate in a glycyl lysine isopeptide (Lys-Gly) (interchain with G-Cter in SUMO2) cross-link. The segment at 789-812 adopts a C2H2-type 11 zinc-finger fold; it reads IKCGTCTKAFHDPESAQQHFHRKH. The important for ubiquitin binding stretch occupies residues 1050-1061; sequence LEEAIRRSLEEM.

Belongs to the krueppel C2H2-type zinc-finger protein family. As to quaternary structure, homooligomer. Interacts (via N-terminal region) with SUMO1. Interacts (via N-terminal region) with SUMO2. Interacts simultaneously with two SUMO2 chains. Identified in a complex with SUMO2 and UBE2I/UBC9, where one ZNF451 interacts with one UBE2I/UBC9 and two SUMO2 chains, one bound to the UBE2I/UBC9 active site and the other to another region of the same UBE2I/UBC9 molecule. Interacts (via C-terminus) with ubiquitin. Interacts (via N-terminal zinc-finger domains) with SMAD4 (via MH2 domain). Interacts with SMAD2 and SMAD3. Identified in a complex that contains at least ZNF451, SMAD2, SMAD3 and SMAD4. Interacts with EP300. Inhibits interaction between EP300 and the SMAD4 complex. Interacts with SIMC1. Post-translationally, sumoylated. Predominantly sumoylated on the N-terminal region that is important for interaction with SUMO1 and SUMO2. Sumoylation is important for localization in nuclear granules; desumoylation leads to diffuse nucleoplasmic location. Autosumoylated (in vitro). Sumoylation enhances E3 SUMO-protein ligase activity.

It is found in the nucleus. It localises to the PML body. The protein localises to the nucleoplasm. It participates in protein modification; protein sumoylation. Functionally, E3 SUMO-protein ligase; has a preference for SUMO2 and SUMO3 and facilitates UBE2I/UBC9-mediated sumoylation of target proteins. Plays a role in protein SUMO2 modification in response to stress caused by DNA damage and by proteasome inhibitors (in vitro). Required for MCM4 sumoylation. Has no activity with SUMO1. Preferentially transfers an additional SUMO2 chain onto the SUMO2 consensus site 'Lys-11'. Negatively regulates transcriptional activation mediated by the SMAD4 complex in response to TGF-beta signaling. Inhibits EP300-mediated acetylation of histone H3 at 'Lys-9'. Plays a role in regulating the transcription of AR targets. The protein is E3 SUMO-protein ligase ZNF451 (ZNF451) of Homo sapiens (Human).